The following is a 538-amino-acid chain: Bifunctional purine biosynthesis protein PurH (538 aa).

In terms of domain architecture, MGS-like spans Ile8–Thr158.

Belongs to the PurH family.

The catalysed reaction is (6R)-10-formyltetrahydrofolate + 5-amino-1-(5-phospho-beta-D-ribosyl)imidazole-4-carboxamide = 5-formamido-1-(5-phospho-D-ribosyl)imidazole-4-carboxamide + (6S)-5,6,7,8-tetrahydrofolate. It carries out the reaction IMP + H2O = 5-formamido-1-(5-phospho-D-ribosyl)imidazole-4-carboxamide. Its pathway is purine metabolism; IMP biosynthesis via de novo pathway; 5-formamido-1-(5-phospho-D-ribosyl)imidazole-4-carboxamide from 5-amino-1-(5-phospho-D-ribosyl)imidazole-4-carboxamide (10-formyl THF route): step 1/1. It functions in the pathway purine metabolism; IMP biosynthesis via de novo pathway; IMP from 5-formamido-1-(5-phospho-D-ribosyl)imidazole-4-carboxamide: step 1/1. The polypeptide is Bifunctional purine biosynthesis protein PurH (Rhizobium rhizogenes (strain K84 / ATCC BAA-868) (Agrobacterium radiobacter)).